The primary structure comprises 688 residues: Glycine--tRNA ligase beta subunit (688 aa).

Belongs to the class-II aminoacyl-tRNA synthetase family. As to quaternary structure, tetramer of two alpha and two beta subunits.

The protein localises to the cytoplasm. It carries out the reaction tRNA(Gly) + glycine + ATP = glycyl-tRNA(Gly) + AMP + diphosphate. The protein is Glycine--tRNA ligase beta subunit of Listeria monocytogenes serotype 4b (strain CLIP80459).